A 180-amino-acid polypeptide reads, in one-letter code: Putative manganese efflux pump MntP (180 aa).

A run of 6 helical transmembrane segments spans residues M1 to T21, I34 to V54, I63 to I83, V103 to I123, V129 to I149, and K160 to F180.

The protein belongs to the MntP (TC 9.B.29) family.

The protein resides in the cell membrane. Its function is as follows. Probably functions as a manganese efflux pump. In Methanosphaera stadtmanae (strain ATCC 43021 / DSM 3091 / JCM 11832 / MCB-3), this protein is Putative manganese efflux pump MntP.